A 66-amino-acid chain; its full sequence is RICDDSSIPFLRTPQLCPKGQDVCYKKTPIVKKFKWLQKKGCASSCPKNGFIKIFKIECCTKDNCI.

Intrachain disulfides connect C3–C24, C17–C42, C46–C59, and C60–C65.

In terms of tissue distribution, expressed by the venom gland.

The protein resides in the secreted. In terms of biological role, not toxic to mice when injected intravenously or intraperitoneally. The polypeptide is Clarkitoxin-1 (Micrurus clarki (Clark's coral snake)).